The chain runs to 370 residues: Cysteine-type anaerobic sulfatase-maturating enzyme (370 aa).

The Radical SAM core domain maps to 1-227 (MPPLSLLIKP…LKNLFDLWYE (227 aa)). [4Fe-4S] cluster contacts are provided by cysteine 15 and cysteine 19. S-adenosyl-L-methionine is bound at residue tyrosine 21. Cysteine 22 is a binding site for [4Fe-4S] cluster. S-adenosyl-L-methionine is bound by residues glycine 66, serine 122, arginine 134, and leucine 195. Residues cysteine 255, cysteine 261, and cysteine 276 each coordinate [4Fe-4S] cluster. Aspartate 277 serves as the catalytic Proton acceptor. [4Fe-4S] cluster contacts are provided by cysteine 317, cysteine 320, cysteine 326, cysteine 330, and cysteine 348.

This sequence belongs to the radical SAM superfamily. Anaerobic sulfatase-maturating enzyme family. [4Fe-4S] cluster serves as cofactor.

The enzyme catalyses L-cysteinyl-[sulfatase] + S-adenosyl-L-methionine + H2O = 3-oxo-L-alanyl-[sulfatase] + hydrogen sulfide + 5'-deoxyadenosine + L-methionine + 2 H(+). It functions in the pathway protein modification; sulfatase oxidation. Involved in 'Cys-type' sulfatase maturation under anaerobic conditions. Catalyzes the post-translational modification of cysteine into 3-oxoalanine (also known as C(alpha)-formylglycine (FGly)), by a free radical chemical mechanism initiated via the reductive cleavage of S-adenosyl-L-methionine (SAM). The chain is Cysteine-type anaerobic sulfatase-maturating enzyme from Clostridium perfringens (strain 13 / Type A).